A 182-amino-acid chain; its full sequence is ATP-dependent protease subunit HslV (182 aa).

Threonine 10 is an active-site residue. The Na(+) site is built by alanine 166, cysteine 169, and serine 172.

This sequence belongs to the peptidase T1B family. HslV subfamily. As to quaternary structure, a double ring-shaped homohexamer of HslV is capped on each side by a ring-shaped HslU homohexamer. The assembly of the HslU/HslV complex is dependent on binding of ATP.

The protein resides in the cytoplasm. The enzyme catalyses ATP-dependent cleavage of peptide bonds with broad specificity.. Allosterically activated by HslU binding. In terms of biological role, protease subunit of a proteasome-like degradation complex believed to be a general protein degrading machinery. This is ATP-dependent protease subunit HslV from Rickettsia africae (strain ESF-5).